A 525-amino-acid chain; its full sequence is Serine/threonine protein phosphatase 2A 55 kDa regulatory subunit B beta isoform (525 aa).

The tract at residues 1 to 30 (MDPSSKSPDDDDLRPEAEAARRPQPQPQPR) is disordered. 2 WD repeats span residues 48-87 (QEVD…DSAS) and 124-165 (EIEE…VKRI). The disordered stretch occupies residues 169 to 191 (NLNTSQSSGNGTTSSSSSSSSRA). The span at 171-189 (NTSQSSGNGTTSSSSSSSS) shows a compositional bias: low complexity. WD repeat units lie at residues 244–282 (AHDY…QSFN), 293–333 (DLTE…LCDN), 352–390 (EIIA…GPVA), and 495–525 (DLST…MYYA).

The protein belongs to the phosphatase 2A regulatory subunit B family. PP2A consists of a common heteromeric enzyme, composed of a catalytic subunit (subunits C), a constant regulatory subunit (subunit A), and a variety of regulatory subunits such as subunits B (the R2/B/PR55/B55, R3/B''/PR72/PR130/PR59 and R5/B'/B56 families).

Functionally, the B regulatory subunit may modulate substrate selectivity and catalytic activity, and may also direct the localization of the catalytic enzyme to a particular subcellular compartment. The sequence is that of Serine/threonine protein phosphatase 2A 55 kDa regulatory subunit B beta isoform from Oryza sativa subsp. japonica (Rice).